The primary structure comprises 444 residues: Chromosome partition protein MukF (444 aa).

Positions 211-239 (LDETSGNLRELQDTLNAAGDKLQAQLLRI) are leucine-zipper.

It belongs to the MukF family. As to quaternary structure, interacts, and probably forms a ternary complex, with MukE and MukB via its C-terminal region. The complex formation is stimulated by calcium or magnesium. It is required for an interaction between MukE and MukB.

The protein resides in the cytoplasm. Its subcellular location is the nucleoid. Involved in chromosome condensation, segregation and cell cycle progression. May participate in facilitating chromosome segregation by condensation DNA from both sides of a centrally located replisome during cell division. Not required for mini-F plasmid partitioning. Probably acts via its interaction with MukB and MukE. Overexpression results in anucleate cells. It has a calcium binding activity. This chain is Chromosome partition protein MukF, found in Actinobacillus succinogenes (strain ATCC 55618 / DSM 22257 / CCUG 43843 / 130Z).